Here is a 172-residue protein sequence, read N- to C-terminus: Stellate orphon protein at 12D (172 aa).

This sequence belongs to the casein kinase 2 subunit beta family. Interacts in vitro with the casein kinase 2 alpha subunit (CkII-alpha). The relevance of such interaction is however unclear in vivo. As to expression, probably not expressed in wild-type flies. In males lacking the Y chromosome, it is testis-specific and constitutes the main component of star-shaped crystals.

Unknown. In males lacking the Y chromosome, its strong overexpression leads to the appearance of proteinaceous star-shaped crystals in the primary spermatocytes causing meiotic drive, possibly by interfering with normal casein kinase 2 activity. This Drosophila melanogaster (Fruit fly) protein is Stellate orphon protein at 12D (Ste12DOR).